The primary structure comprises 495 residues: Cytochrome P450 2E1 (495 aa).

298 to 303 is a substrate binding site; it reads FAGTET. Cys-437 is a binding site for heme.

The protein belongs to the cytochrome P450 family. Interacts with chaperones HSP70 and HSP90; this interaction is required for initial targeting to mitochondria. The cofactor is heme.

It localises to the endoplasmic reticulum membrane. It is found in the microsome membrane. Its subcellular location is the mitochondrion inner membrane. The catalysed reaction is an organic molecule + reduced [NADPH--hemoprotein reductase] + O2 = an alcohol + oxidized [NADPH--hemoprotein reductase] + H2O + H(+). The enzyme catalyses (5Z,8Z,11Z)-eicosatrienoate + reduced [NADPH--hemoprotein reductase] + O2 = 19-hydroxy-(5Z,8Z,11Z)-eicosatrienoate + oxidized [NADPH--hemoprotein reductase] + H2O + H(+). It catalyses the reaction (5Z,8Z,11Z,14Z,17Z)-eicosapentaenoate + reduced [NADPH--hemoprotein reductase] + O2 = 19-hydroxy-(5Z,8Z,11Z,14Z,17Z)-eicosapentaenoate + oxidized [NADPH--hemoprotein reductase] + H2O + H(+). It carries out the reaction (4Z,7Z,10Z,13Z,16Z,19Z)-docosahexaenoate + reduced [NADPH--hemoprotein reductase] + O2 = 21-hydroxy-(4Z,7Z,10Z,13Z,16Z,19Z)-docosahexaenoate + oxidized [NADPH--hemoprotein reductase] + H2O + H(+). The catalysed reaction is dodecanoate + reduced [NADPH--hemoprotein reductase] + O2 = 11-hydroxydodecanoate + oxidized [NADPH--hemoprotein reductase] + H2O + H(+). The enzyme catalyses tetradecanoate + reduced [NADPH--hemoprotein reductase] + O2 = 13-hydroxytetradecanoate + oxidized [NADPH--hemoprotein reductase] + H2O + H(+). It catalyses the reaction 4-nitrophenol + NADPH + O2 + H(+) = 4-nitrocatechol + NADP(+) + H2O. The protein operates within lipid metabolism; fatty acid metabolism. The omega-1 hydroxylase activity is stimulated by cytochrome b5. Its function is as follows. A cytochrome P450 monooxygenase involved in the metabolism of fatty acids. Mechanistically, uses molecular oxygen inserting one oxygen atom into a substrate, and reducing the second into a water molecule, with two electrons provided by NADPH via cytochrome P450 reductase (NADPH--hemoprotein reductase). Catalyzes the hydroxylation of carbon-hydrogen bonds. Hydroxylates fatty acids specifically at the omega-1 position displaying the highest catalytic activity for saturated fatty acids. May be involved in the oxidative metabolism of xenobiotics. The protein is Cytochrome P450 2E1 (CYP2E1) of Sus scrofa (Pig).